The sequence spans 1463 residues: Secretory phospholipase A2 receptor (1463 aa).

An N-terminal signal peptide occupies residues 1–20 (MLLSPSLLLLLLLGAPRGCA). The Extracellular segment spans residues 21-1397 (EGVAAALTPE…ALPEKGPSHS (1377 aa)). Positions 38 to 161 (KGIFVIQSES…GSGGGDICEY (124 aa)) constitute a Ricin B-type lectin domain. Intrachain disulfides connect Cys-51–Cys-64, Cys-89–Cys-106, Cys-178–Cys-204, Cys-192–Cys-219, Cys-260–Cys-354, Cys-330–Cys-346, Cys-406–Cys-501, Cys-478–Cys-493, Cys-617–Cys-634, Cys-699–Cys-796, Cys-774–Cys-788, Cys-840–Cys-937, Cys-914–Cys-929, and Cys-1067–Cys-1087. N-linked (GlcNAc...) asparagine glycosylation occurs at Asn-93. Residues 173 to 221 (THGMPCMFPFQYNHQWHHECTREGREDDLLWCATTSRYERDEKWGFCPD) enclose the Fibronectin type-II domain. C-type lectin domains follow at residues 238 to 355 (NSHI…YICK), 385 to 502 (YNRN…YICK), 522 to 643 (HGGF…MSLC), 673 to 797 (GLAS…WICK), 819 to 938 (YQDA…SICK), 965 to 1096 (FNYK…GFVC), 1121 to 1232 (YGNR…GAIC), and 1257 to 1378 (FKSN…FICK). Residue Asn-454 is glycosylated (N-linked (GlcNAc...) asparagine). Asn-1123 carries N-linked (GlcNAc...) asparagine glycosylation. 3 disulfide bridges follow: Cys-1209–Cys-1223, Cys-1280–Cys-1377, and Cys-1354–Cys-1369. The helical transmembrane segment at 1398 to 1418 (IIPLAVVLTLIVIVAICTLSF) threads the bilayer. Residues 1419-1463 (CIYKHNGGFFRRLAGFRNPYYPATNFSTVYLEENILISDLEKSDQ) lie on the Cytoplasmic side of the membrane. The short motif at 1436 to 1442 (NPYYPAT) is the Endocytosis signal element.

In terms of assembly, interacts with sPLA2-IB/PLA2G1B; this interaction mediates intracellular signaling as well as clearance of extracellular sPLA2-IB/PLA2G1B via endocytotic pathway. Interacts with sPLA2-X/PLA2G10; this interaction mediates sPLA2-X/PLA2G10 clearance and inactivation. Post-translationally, the secretory phospholipase A2 receptor form may be produced by the action of metalloproteinases. It contains all extracellular domains and only lacks transmembrane and cytosolic regions. It is however unclear whether this form is produced by proteolytic cleavage as suggested by some experiments, or by alternative splicing, as in the case of isoform 2 that shares all characteristics of secretory phospholipase A2 receptor form. As to expression, expressed in podocytes (at protein level). Present in lung macrophage (at protein level). Highly expressed in kidney. Also expressed in pancreas, amnion, choriodecidua and placenta. Isoform 2 is expressed at much lower level.

The protein resides in the cell membrane. The protein localises to the secreted. Its function is as follows. Receptor for secretory phospholipase A2 (sPLA2). Acts as a receptor for phospholipase sPLA2-IB/PLA2G1B but not sPLA2-IIA/PLA2G2A. Also able to bind to snake PA2-like toxins. Although its precise function remains unclear, binding of sPLA2 to its receptor participates in both positive and negative regulation of sPLA2 functions as well as clearance of sPLA2. Binding of sPLA2-IB/PLA2G1B induces various effects depending on the cell type, such as activation of the mitogen-activated protein kinase (MAPK) cascade to induce cell proliferation, the production of lipid mediators, selective release of arachidonic acid in bone marrow-derived mast cells. In neutrophils, binding of sPLA2-IB/PLA2G1B can activate p38 MAPK to stimulate elastase release and cell adhesion. May be involved in responses in pro-inflammatory cytokine productions during endotoxic shock. Also has endocytic properties and rapidly internalizes sPLA2 ligands, which is particularly important for the clearance of extracellular sPLA2s to protect their potent enzymatic activities. The soluble secretory phospholipase A2 receptor form is circulating and acts as a negative regulator of sPLA2 functions by blocking the biological functions of sPLA2-IB/PLA2G1B. In podocytes, binding of sPLA2-IB/PLA2G1B can regulate podocyte survival and glomerular homeostasis. This is Secretory phospholipase A2 receptor (PLA2R1) from Homo sapiens (Human).